A 210-amino-acid chain; its full sequence is MKSKIDYTLYLVTDHQLMSTKTLEEAVEQAIAGGCTLVQLREKTASSRDFYQNAINVKTITDKYNVPLIINDRIDIALAVGADGVHVGQSDLPAAVVRKIIGNDKILGVSAGSVEKAIEAQKIGADYIGVGALFSTSTKTDAKAVSIETLMKIVREVSIPVVGIGGINAENAVQLKNTGIRGIAVVSAIISQKDIKSSAEKLLEIFVNKA.

Residues 39–43 (QLREK) and Asn71 contribute to the 4-amino-2-methyl-5-(diphosphooxymethyl)pyrimidine site. Mg(2+) is bound by residues Asp72 and Asp91. Residue Ser110 participates in 4-amino-2-methyl-5-(diphosphooxymethyl)pyrimidine binding. 136–138 (TST) contributes to the 2-[(2R,5Z)-2-carboxy-4-methylthiazol-5(2H)-ylidene]ethyl phosphate binding site. Lys139 is a binding site for 4-amino-2-methyl-5-(diphosphooxymethyl)pyrimidine. 2-[(2R,5Z)-2-carboxy-4-methylthiazol-5(2H)-ylidene]ethyl phosphate contacts are provided by residues Gly166 and 186–187 (VS).

Belongs to the thiamine-phosphate synthase family. The cofactor is Mg(2+).

It catalyses the reaction 2-[(2R,5Z)-2-carboxy-4-methylthiazol-5(2H)-ylidene]ethyl phosphate + 4-amino-2-methyl-5-(diphosphooxymethyl)pyrimidine + 2 H(+) = thiamine phosphate + CO2 + diphosphate. The catalysed reaction is 2-(2-carboxy-4-methylthiazol-5-yl)ethyl phosphate + 4-amino-2-methyl-5-(diphosphooxymethyl)pyrimidine + 2 H(+) = thiamine phosphate + CO2 + diphosphate. It carries out the reaction 4-methyl-5-(2-phosphooxyethyl)-thiazole + 4-amino-2-methyl-5-(diphosphooxymethyl)pyrimidine + H(+) = thiamine phosphate + diphosphate. It functions in the pathway cofactor biosynthesis; thiamine diphosphate biosynthesis; thiamine phosphate from 4-amino-2-methyl-5-diphosphomethylpyrimidine and 4-methyl-5-(2-phosphoethyl)-thiazole: step 1/1. Its function is as follows. Condenses 4-methyl-5-(beta-hydroxyethyl)thiazole monophosphate (THZ-P) and 2-methyl-4-amino-5-hydroxymethyl pyrimidine pyrophosphate (HMP-PP) to form thiamine monophosphate (TMP). This chain is Thiamine-phosphate synthase, found in Ruminiclostridium cellulolyticum (strain ATCC 35319 / DSM 5812 / JCM 6584 / H10) (Clostridium cellulolyticum).